The following is a 290-amino-acid chain: Lipid phosphate phosphatase 2 (290 aa).

Transmembrane regions (helical) follow at residues 26-46 (WLILLLLIVIEIVLNVIEPFH), 69-89 (WAVPLIAVVLPFAVICVYYFI), and 93-113 (VYDLHHAILGLLFSVLITGVI). Residue asparagine 142 is glycosylated (N-linked (GlcNAc...) asparagine). The next 3 helical transmembrane spans lie at 162–182 (SFPSGHTSWSFAGLGFLSLYL), 193–213 (GHVAKLCIVILPLLVAALVGV), and 226–246 (VFGGAIIGLTVATFCYLQFFP).

This sequence belongs to the PA-phosphatase related phosphoesterase family. Expressed in roots, stems, leaves, buds, flowers and siliques.

The protein resides in the membrane. With respect to regulation, PA phosphatase activity not inhibited by N-ethylmaleimide. May play a general 'housekeeping role' in lipid metabolism. Exhibits both diacylglycerol pyrophosphate (DGPP) phosphatase and phosphatidate (PA) phosphatase activities with no preference for either substrate. May play a role downstream of the ABA signaling pathway during seed germination and in stomatal movement in leaves. The chain is Lipid phosphate phosphatase 2 (LPP2) from Arabidopsis thaliana (Mouse-ear cress).